Consider the following 180-residue polypeptide: Translation machinery-associated protein 16 homolog (180 aa).

The span at 1–12 (MTNLRKELEKCK) shows a compositional bias: basic and acidic residues. The interval 1–32 (MTNLRKELEKCKHPNSRKTKALGKKARRQNNK) is disordered. Positions 13–32 (HPNSRKTKALGKKARRQNNK) are enriched in basic residues.

Belongs to the TMA16 family.

The sequence is that of Translation machinery-associated protein 16 homolog from Drosophila melanogaster (Fruit fly).